The primary structure comprises 34 residues: Photosystem II reaction center protein Psb30 (34 aa).

A helical membrane pass occupies residues 6 to 26 (VIAQLVSLGVIVLVGPAVIIL).

Belongs to the Psb30/Ycf12 family. In terms of assembly, PSII is composed of 1 copy each of membrane proteins PsbA, PsbB, PsbC, PsbD, PsbE, PsbF, PsbH, PsbI, PsbJ, PsbK, PsbL, PsbM, PsbT, PsbX, PsbY, PsbZ, Psb30/Ycf12, peripheral proteins of the oxygen-evolving complex and a large number of cofactors. It forms dimeric complexes.

The protein localises to the plastid. Its subcellular location is the chloroplast thylakoid membrane. Its function is as follows. A core subunit of photosystem II (PSII), probably helps stabilize the reaction center. The polypeptide is Photosystem II reaction center protein Psb30 (Pyropia yezoensis (Susabi-nori)).